The sequence spans 188 residues: EP300-interacting inhibitor of differentiation 1 (188 aa).

The disordered stretch occupies residues M1–G122. Composition is skewed to acidic residues over residues L53 to A64 and F94 to Q117. The interval E55 to A121 is interaction with NR0B2. An LXCXE motif motif is present at residues L179 to E183.

In terms of assembly, interacts via its LXCXE motif with the entire pocket region of RB1. Interacts with EP300, NR0B2 and TRIM27.

It is found in the nucleus. The protein resides in the cytoplasm. Interacts with RB1 and EP300 and acts as a repressor of MYOD1 transactivation. Inhibits EP300 and CBP histone acetyltransferase activity. May be involved in coupling cell cycle exit to the transcriptional activation of genes required for cellular differentiation. May act as a candidate coinhibitory factor for NR0B2 that can be directly linked to transcription inhibitory mechanisms. The chain is EP300-interacting inhibitor of differentiation 1 from Pongo abelii (Sumatran orangutan).